The primary structure comprises 99 residues: Small ribosomal subunit protein bS18 (99 aa).

Positions 1–25 (MAESKGRPGSASQRPTGGDKAIAGQ) are disordered.

The protein belongs to the bacterial ribosomal protein bS18 family. As to quaternary structure, part of the 30S ribosomal subunit. Forms a tight heterodimer with protein bS6.

Functionally, binds as a heterodimer with protein bS6 to the central domain of the 16S rRNA, where it helps stabilize the platform of the 30S subunit. This is Small ribosomal subunit protein bS18 from Solibacter usitatus (strain Ellin6076).